The sequence spans 866 residues: Translation initiation factor IF-2 (866 aa).

2 disordered regions span residues 1-63 (MTND…AAVQ) and 92-257 (VVRA…RGRS). Polar residues predominate over residues 26-36 (ETGQVRQSFSH). Residues 92–135 (VVRAAEEAERKRLEEIERRRREEEEARLKVEEEARRKAEEEAAR) are compositionally biased toward basic and acidic residues. Low complexity-rich tracts occupy residues 152 to 164 (VAPA…AAPQ) and 179 to 197 (PDAS…TEAP). In terms of domain architecture, tr-type G spans 365–533 (SRPPVVTVMG…AILLQSEILD (169 aa)). A G1 region spans residues 374 to 381 (GHVDHGKT). Residue 374–381 (GHVDHGKT) coordinates GTP. A G2 region spans residues 399-403 (GITQH). Positions 421–424 (DTPG) are G3. Residues 421–425 (DTPGH) and 475–478 (NKMD) contribute to the GTP site. The interval 475–478 (NKMD) is G4. Residues 511 to 513 (SAK) are G5.

Belongs to the TRAFAC class translation factor GTPase superfamily. Classic translation factor GTPase family. IF-2 subfamily.

The protein resides in the cytoplasm. Its function is as follows. One of the essential components for the initiation of protein synthesis. Protects formylmethionyl-tRNA from spontaneous hydrolysis and promotes its binding to the 30S ribosomal subunits. Also involved in the hydrolysis of GTP during the formation of the 70S ribosomal complex. The sequence is that of Translation initiation factor IF-2 from Rhodospirillum rubrum (strain ATCC 11170 / ATH 1.1.1 / DSM 467 / LMG 4362 / NCIMB 8255 / S1).